Here is a 178-residue protein sequence, read N- to C-terminus: MVLLLVLGLVLSLATAQFNLHTAVRRDYNLARISGTWYLDSIASDNMTRIEENGDLRLFIRNIKLLNNGSLQFDFHFMLQGECVAVTMVCEKTKNNGEFSVAYEGKNKVLLLETDYSMYIIFYMQNIKNGTKTQVLALYGRSILLDKTHQREFENICNLYGLDSQNIIDMTKKDFCFL.

Positions 1–16 (MVLLLVLGLVLSLATA) are cleaved as a signal peptide. N46, N68, and N129 each carry an N-linked (GlcNAc...) asparagine glycan. Cysteines 83 and 176 form a disulfide.

Belongs to the calycin superfamily. Lipocalin family. As to expression, expressed in epididymis. Not detected in all other tissues tested.

It localises to the secreted. This chain is Epididymal-specific lipocalin-9 (Lcn9), found in Mus musculus (Mouse).